Consider the following 212-residue polypeptide: Golgi SNAP receptor complex member 2 (212 aa).

M1 is subject to N-acetylmethionine. Over 1 to 190 the chain is Cytoplasmic; sequence MEPLYQQTHK…LIEKRAFQDK (190 aa). Residues 61–107 adopt a coiled-coil conformation; sequence NRRQNAKLRVDQLKYDVQHLQTALRNFQHRRQAKEQQERQRDELLSR. An IxM motif; signal for cargo packaging into COPII-coated vesicles motif is present at residues 118 to 120; the sequence is IPM. The chain crosses the membrane as a helical; Anchor for type IV membrane protein span at residues 191 to 211; it reads YFMIGGMLLTCAVMFLVVQYL. Position 212 (T212) is a topological domain, vesicular.

Belongs to the GOSR2 family. As to quaternary structure, part of a unique SNARE complex composed of the Golgi SNAREs GOSR1, STX5 and YKT6. Interacts with BET1.

It is found in the golgi apparatus. It localises to the cis-Golgi network membrane. The protein resides in the golgi apparatus membrane. Its subcellular location is the endoplasmic reticulum membrane. Functionally, involved in transport of proteins from the cis/medial-Golgi to the trans-Golgi network. The sequence is that of Golgi SNAP receptor complex member 2 (Gosr2) from Rattus norvegicus (Rat).